The following is a 210-amino-acid chain: Glycerol-3-phosphate acyltransferase 2 (210 aa).

6 helical membrane passes run 4–24 (LIMV…PAPY), 52–72 (VGFW…ALAM), 73–93 (AVAN…LMAI), 114–134 (IGIL…CFLI), 141–161 (FPTL…WLGQ), and 163–183 (DMGK…MYIP).

The protein belongs to the PlsY family. Probably interacts with PlsX.

The protein localises to the cell membrane. The enzyme catalyses an acyl phosphate + sn-glycerol 3-phosphate = a 1-acyl-sn-glycero-3-phosphate + phosphate. It participates in lipid metabolism; phospholipid metabolism. Functionally, catalyzes the transfer of an acyl group from acyl-phosphate (acyl-PO(4)) to glycerol-3-phosphate (G3P) to form lysophosphatidic acid (LPA). This enzyme utilizes acyl-phosphate as fatty acyl donor, but not acyl-CoA or acyl-ACP. This is Glycerol-3-phosphate acyltransferase 2 from Dehalococcoides mccartyi (strain CBDB1).